The chain runs to 292 residues: G1/S-specific cyclin-D3 (292 aa).

Positions 27–152 (VLQSLLRLEE…LVLGKLKWDL (126 aa)) constitute a Cyclin N-terminal domain. The segment at 254 to 292 (SLREASQTSSSPAPKAPRGSSSQGPSQTSTPTDVTAIHL) is disordered. A phosphoserine mark is found at serine 264 and serine 279. Residues 272–285 (GSSSQGPSQTSTPT) show a composition bias toward low complexity. Threonine 283 carries the post-translational modification Phosphothreonine.

This sequence belongs to the cyclin family. Cyclin D subfamily. As to quaternary structure, interacts with the CDK4 and CDK6 protein kinases to form a serine/threonine kinase holoenzyme complex. The cyclin subunit imparts substrate specificity to the complex. Interacts with ATF5. Interacts with EIF3K. Component of the ternary complex cyclin D/CDK4/CDKN1B required for nuclear translocation and modulation of CDK4-mediated kinase activity. Can form similar complexes with either CDKN1A or CDKN2A. In terms of processing, phosphorylation at Thr-283 by MAP kinases is required for ubiquitination and degradation by the DCX(AMBRA1) complex. Ubiquitinated by the DCX(AMBRA1) complex during the transition from G1 to S cell phase, leading to its degradation: ubiquitination is dependent on Thr-283 phosphorylation. The DCX(AMBRA1) complex represents the major regulator of CCND3 stability during the G1/S transition. Polyubiquitinated by the SCF(FBXL2) complex, leading to proteasomal degradation.

The protein localises to the nucleus. It localises to the cytoplasm. In terms of biological role, regulatory component of the cyclin D3-CDK4 (DC) complex that phosphorylates and inhibits members of the retinoblastoma (RB) protein family including RB1 and regulates the cell-cycle during G(1)/S transition. Phosphorylation of RB1 allows dissociation of the transcription factor E2F from the RB/E2F complex and the subsequent transcription of E2F target genes which are responsible for the progression through the G(1) phase. Hypophosphorylates RB1 in early G(1) phase. Cyclin D-CDK4 complexes are major integrators of various mitogenenic and antimitogenic signals. Component of the ternary complex, cyclin D3/CDK4/CDKN1B, required for nuclear translocation and activity of the cyclin D-CDK4 complex. Shows transcriptional coactivator activity with ATF5 independently of CDK4. The chain is G1/S-specific cyclin-D3 from Homo sapiens (Human).